A 464-amino-acid chain; its full sequence is Probable LL-diaminopimelate aminotransferase, chloroplastic (464 aa).

The transit peptide at M1–R39 directs the protein to the chloroplast. G102 contacts substrate. Y132 provides a ligand contact to pyridoxal 5'-phosphate. Residues E135, K167, Y190, and N247 each coordinate substrate. Positions 247, 275, 278, 305, and 307 each coordinate pyridoxal 5'-phosphate. At K308 the chain carries N6-(pyridoxal phosphate)lysine. R316 contacts pyridoxal 5'-phosphate. Substrate-binding residues include N347 and R442.

This sequence belongs to the class-I pyridoxal-phosphate-dependent aminotransferase family. LL-diaminopimelate aminotransferase subfamily. In terms of assembly, homodimer. Pyridoxal 5'-phosphate is required as a cofactor.

It localises to the plastid. Its subcellular location is the chloroplast. It carries out the reaction (2S,6S)-2,6-diaminopimelate + 2-oxoglutarate = (S)-2,3,4,5-tetrahydrodipicolinate + L-glutamate + H2O + H(+). Its pathway is amino-acid biosynthesis; L-lysine biosynthesis via DAP pathway; LL-2,6-diaminopimelate from (S)-tetrahydrodipicolinate (aminotransferase route): step 1/1. Its function is as follows. Required for lysine biosynthesis. Catalyzes the direct conversion of tetrahydrodipicolinate to LL-diaminopimelate, a reaction that requires three enzymes in E.coli. In Oryza sativa subsp. japonica (Rice), this protein is Probable LL-diaminopimelate aminotransferase, chloroplastic (AGD2).